Consider the following 339-residue polypeptide: Dihydroorotate dehydrogenase (quinone) (339 aa).

FMN contacts are provided by residues 64–68 (AGADK) and T88. K68 serves as a coordination point for substrate. 113-117 (NRNGF) contacts substrate. FMN-binding residues include N141 and N174. Position 174 (N174) interacts with substrate. S177 serves as the catalytic Nucleophile. N179 is a substrate binding site. FMN is bound by residues K219 and T247. Position 248–249 (248–249 (NT)) interacts with substrate. FMN contacts are provided by residues G270, G299, and 320–321 (YS).

The protein belongs to the dihydroorotate dehydrogenase family. Type 2 subfamily. Monomer. FMN serves as cofactor.

The protein resides in the cell membrane. The enzyme catalyses (S)-dihydroorotate + a quinone = orotate + a quinol. It functions in the pathway pyrimidine metabolism; UMP biosynthesis via de novo pathway; orotate from (S)-dihydroorotate (quinone route): step 1/1. Catalyzes the conversion of dihydroorotate to orotate with quinone as electron acceptor. The protein is Dihydroorotate dehydrogenase (quinone) of Haemophilus influenzae (strain PittEE).